The chain runs to 385 residues: Taurine hydroxylase-like protein SAT17 (385 aa).

It functions in the pathway mycotoxin biosynthesis. In terms of biological role, taurine hydroxylase-like protein; part of the satratoxin SC3 cluster involved in the biosynthesis of satratoxins, trichothecene mycotoxins that are associated with human food poisonings. Satratoxins are suggested to be made by products of multiple gene clusters (SC1, SC2 and SC3) that encode 21 proteins in all, including polyketide synthases, acetyltransferases, and other enzymes expected to modify the trichothecene skeleton. SC1 encodes 10 proteins, SAT1 to SAT10. The largest are SAT8, which encodes a putative polyketide synthase (PKS) with a conventional non-reducing architecture, and SAT10, a putative protein containing four ankyrin repeats and thus may be involved in protein scaffolding. The putative short-chain reductase SAT3 may assist the PKS in some capacity. SAT6 contains a secretory lipase domain and acts probably as a trichothecene esterase. SAT5 encodes a putative acetyltransferase, and so, with SAT6, may affect endogenous protection from toxicity. The probable transcription factor SAT9 may regulate the expression of the SC1 cluster. SC2 encodes proteins SAT11 to SAT16, the largest of which encodes the putative reducing PKS SAT13. SAT11 is a cytochrome P450 monooxygenase, while SAT14 and SAT16 are probable acetyltransferases. The SC2 cluster may be regulated by the transcription factor SAT15. SC3 is a small cluster that encodes 5 proteins, SAT17 to SAT21. SAT21 is a putative MFS-type transporter which may have a role in exporting secondary metabolites. The four other proteins putatively encoded in SC3 include the taurine hydroxylase-like protein SAT17, the O-methyltransferase SAT18, the acetyltransferase SAT19, and the Cys6-type zinc finger SAT20, the latter being probably involved in regulation of SC3 expression. This Stachybotrys chartarum (strain CBS 109288 / IBT 7711) (Toxic black mold) protein is Taurine hydroxylase-like protein SAT17.